Consider the following 394-residue polypeptide: Small ribosomal subunit protein uS2m (394 aa).

A mitochondrion-targeting transit peptide spans 1–25; the sequence is MQRHVFARNFRRLSLLRNPSLTKRF.

The protein belongs to the universal ribosomal protein uS2 family. In terms of assembly, component of the mitochondrial small ribosomal subunit (mt-SSU). Mature yeast 74S mitochondrial ribosomes consist of a small (37S) and a large (54S) subunit. The 37S small subunit contains a 15S ribosomal RNA (15S mt-rRNA) and 34 different proteins. The 54S large subunit contains a 21S rRNA (21S mt-rRNA) and 46 different proteins.

It is found in the mitochondrion. Its function is as follows. Component of the mitochondrial ribosome (mitoribosome), a dedicated translation machinery responsible for the synthesis of mitochondrial genome-encoded proteins, including at least some of the essential transmembrane subunits of the mitochondrial respiratory chain. The mitoribosomes are attached to the mitochondrial inner membrane and translation products are cotranslationally integrated into the membrane. This is Small ribosomal subunit protein uS2m (MRP4) from Saccharomyces cerevisiae (strain ATCC 204508 / S288c) (Baker's yeast).